Here is a 219-residue protein sequence, read N- to C-terminus: Clathrin light chain (219 aa).

The disordered stretch occupies residues 32–136 (AEITGGSASA…KKEELRQQSK (105 aa)). The interval 96–158 (PPPSREEPEK…SISKTKLASR (63 aa)) is involved in binding clathrin heavy chain. Positions 99 to 136 (SREEPEKIRKWREEQKQRLEEKDIEEERKKEELRQQSK) are enriched in basic and acidic residues.

It belongs to the clathrin light chain family. Clathrin coats are formed from molecules containing 3 heavy chains and 3 light chains.

It localises to the cytoplasmic vesicle membrane. The protein resides in the membrane. It is found in the coated pit. In terms of biological role, clathrin is the major protein of the polyhedral coat of coated pits and vesicles. This is Clathrin light chain (Clc) from Drosophila melanogaster (Fruit fly).